Consider the following 465-residue polypeptide: Alpha-2A adrenergic receptor (465 aa).

At 1–48 the chain is on the extracellular side; that stretch reads MFRQEQPLAEGSFAPMGSLQPDAGNASWNGTEAPGGGARATPYSLQVT. N-linked (GlcNAc...) asparagine glycans are attached at residues N25 and N29. The helical transmembrane segment at 49–74 threads the bilayer; sequence LTLVCLAGLLMLLTVFGNVLVIIAVF. The Cytoplasmic portion of the chain corresponds to 75-85; that stretch reads TSRALKAPQNL. The chain crosses the membrane as a helical span at residues 86-111; that stretch reads FLVSLASADILVATLVIPFSLANEVM. Residues 112–121 lie on the Extracellular side of the membrane; that stretch reads GYWYFGKAWC. A disulfide bridge connects residues C121 and C203. Residues 122–144 form a helical membrane-spanning segment; it reads EIYLALDVLFCTSSIVHLCAISL. Over 145–166 the chain is Cytoplasmic; that stretch reads DRYWSITQAIEYNLKRTPRRIK. A helical transmembrane segment spans residues 167–187; it reads AIIITVWVISAVISFPPLISI. The Extracellular segment spans residues 188 to 209; that stretch reads EKKGGGGGPQPAEPRCEINDQK. Residues 210-232 traverse the membrane as a helical segment; sequence WYVISSCIGSFFAPCLIMILVYV. At 233 to 389 the chain is on the cytoplasmic side; sequence RIYQIAKRRT…RQNREKRFTF (157 aa). The segment at 242–368 is disordered; sequence TRVPPSRRGP…TPAAGPGEER (127 aa). The segment covering 313-330 has biased composition (basic and acidic residues); it reads SSDHAERPPGPRRPERGP. S346 carries the post-translational modification Phosphoserine. At R368 the chain carries Omega-N-methylarginine. The helical transmembrane segment at 390–410 threads the bilayer; it reads VLAVVIGVFVVCWFPFFFTYT. Residues 411–424 lie on the Extracellular side of the membrane; it reads LTAVGCSVPRTLFK. The chain crosses the membrane as a helical span at residues 425–444; it reads FFFWFGYCNSSLNPVIYTIF. At 445–465 the chain is on the cytoplasmic side; the sequence is NHDFRRAFKKILCRGDRKRIV. C457 carries the S-palmitoyl cysteine lipid modification.

Belongs to the G-protein coupled receptor 1 family. Adrenergic receptor subfamily. ADRA2A sub-subfamily.

The protein resides in the cell membrane. In terms of biological role, alpha-2 adrenergic receptors mediate the catecholamine-induced inhibition of adenylate cyclase through the action of G proteins. The rank order of potency for agonists of this receptor is oxymetazoline &gt; clonidine &gt; epinephrine &gt; norepinephrine &gt; phenylephrine &gt; dopamine &gt; p-synephrine &gt; p-tyramine &gt; serotonin = p-octopamine. For antagonists, the rank order is yohimbine &gt; phentolamine = mianserine &gt; chlorpromazine = spiperone = prazosin &gt; propanolol &gt; alprenolol = pindolol. The protein is Alpha-2A adrenergic receptor of Homo sapiens (Human).